The following is an 892-amino-acid chain: Phenylalanine--tRNA ligase beta subunit (892 aa).

Positions 39–150 (NPGVEGVVVG…PGLEPGMDVA (112 aa)) constitute a tRNA-binding domain. Residues 406 to 569 (AVPPVILLRT…RCEGYDAIPL (164 aa)) form the B5 domain. The insert stretch occupies residues 442-518 (VLTPADLAAD…ALLGGGESDG (77 aa)). Positions 547, 553, 556, and 557 each coordinate Mg(2+). Residues 799–891 (PRFPAVTRDV…ALKALGAELR (93 aa)) form the FDX-ACB domain.

Belongs to the phenylalanyl-tRNA synthetase beta subunit family. Type 1 subfamily. In terms of assembly, tetramer of two alpha and two beta subunits. Mg(2+) is required as a cofactor.

The protein localises to the cytoplasm. It catalyses the reaction tRNA(Phe) + L-phenylalanine + ATP = L-phenylalanyl-tRNA(Phe) + AMP + diphosphate + H(+). The polypeptide is Phenylalanine--tRNA ligase beta subunit (Symbiobacterium thermophilum (strain DSM 24528 / JCM 14929 / IAM 14863 / T)).